A 320-amino-acid chain; its full sequence is o-succinylbenzoate synthase (320 aa).

The active-site Proton donor is the Lys133. Residues Asp161, Glu190, and Asp213 each coordinate Mg(2+). Lys235 functions as the Proton acceptor in the catalytic mechanism.

It belongs to the mandelate racemase/muconate lactonizing enzyme family. MenC type 1 subfamily. Requires a divalent metal cation as cofactor.

It catalyses the reaction (1R,6R)-6-hydroxy-2-succinyl-cyclohexa-2,4-diene-1-carboxylate = 2-succinylbenzoate + H2O. It functions in the pathway quinol/quinone metabolism; 1,4-dihydroxy-2-naphthoate biosynthesis; 1,4-dihydroxy-2-naphthoate from chorismate: step 4/7. It participates in quinol/quinone metabolism; menaquinone biosynthesis. Its function is as follows. Converts 2-succinyl-6-hydroxy-2,4-cyclohexadiene-1-carboxylate (SHCHC) to 2-succinylbenzoate (OSB). In Escherichia coli (strain K12 / MC4100 / BW2952), this protein is o-succinylbenzoate synthase.